The primary structure comprises 75 residues: Carwaprin-b (75 aa).

The signal sequence occupies residues 1 to 24 (MSSGGLLLLLGLLTLWAELTPVSS). The WAP domain occupies 27–72 (RPKKPGLCPPRPQKPPCVRECKNDWRCPGEQKCCRYGCIYECRDPI). 4 disulfides stabilise this stretch: Cys-34–Cys-60, Cys-43–Cys-64, Cys-47–Cys-59, and Cys-53–Cys-68.

This sequence belongs to the venom waprin family. As to expression, expressed by the venom gland.

The protein localises to the secreted. In terms of biological role, damages membranes of susceptible bacteria. Has no hemolytic activity. Not toxic to mice. Does not inhibit the proteinases elastase and cathepsin G. In Tropidechis carinatus (Australian rough-scaled snake), this protein is Carwaprin-b.